We begin with the raw amino-acid sequence, 475 residues long: Putative aldehyde dehydrogenase (475 aa).

NAD(+)-binding positions include 146–147 (WN) and 223–224 (GS). Glutamate 245 functions as the Proton acceptor in the catalytic mechanism. Position 246 (leucine 246) interacts with NAD(+). Residue cysteine 279 is the Nucleophile of the active site. Glutamate 379 serves as a coordination point for NAD(+).

This sequence belongs to the aldehyde dehydrogenase family.

It carries out the reaction an aldehyde + NAD(+) + H2O = a carboxylate + NADH + 2 H(+). The chain is Putative aldehyde dehydrogenase from Staphylococcus aureus (strain bovine RF122 / ET3-1).